Consider the following 247-residue polypeptide: Cell division protein ZapD (247 aa).

This sequence belongs to the ZapD family. As to quaternary structure, interacts with FtsZ.

The protein resides in the cytoplasm. Cell division factor that enhances FtsZ-ring assembly. Directly interacts with FtsZ and promotes bundling of FtsZ protofilaments, with a reduction in FtsZ GTPase activity. The protein is Cell division protein ZapD of Escherichia coli O17:K52:H18 (strain UMN026 / ExPEC).